A 74-amino-acid chain; its full sequence is Large ribosomal subunit protein bL31 (74 aa).

This sequence belongs to the bacterial ribosomal protein bL31 family. Type A subfamily. In terms of assembly, part of the 50S ribosomal subunit.

Its function is as follows. Binds the 23S rRNA. This chain is Large ribosomal subunit protein bL31, found in Chlorobaculum parvum (strain DSM 263 / NCIMB 8327) (Chlorobium vibrioforme subsp. thiosulfatophilum).